A 1496-amino-acid chain; its full sequence is MKPLAAPANHGVLGQQEKQSLPADFTKLHLTDSLHPQVTHVSSSHSGCSITSDSGSSSLSDIYQATESEAGDMDLSGLPETAVDSEDDDDEEDIERASDPLMSRDIVRDCLEKDPIDRTDDDIEQLLEFMHQLPAFANMTMSVRRELCAVMVFAVVERAGTIVLNDGEELDSWSVILNGSVEVTYPDGKAEILCMGNSFGVSPTMDKEYMKGVMRTKVDDCQFVCIAQQDYCRILNQVEKNMQKVEEEGEIVMVKEHRELDRTGTRKGHIVIKGTSERLTMHLVEEHSVVDPTFIEDFLLTYRTFLSSPMEVGKKLLEWFNDPSLRDKVTRVVLLWVNNHFNDFEGDPAMTRFLEEFENNLEREKMGGHLRLLNIACAAKAKRRLMTLTKPSREAPLPFILLGGSEKGFGIFVDSVDSCSKATEAGLKRGDQILEVNGQNFENIQLSKAMEILRNNTHLSITVKTNLFVFKELLTRLSEEKRNGAPHLPKIGDIKKASRYSIPDLAVDVEQVIGLEKVNKKSKANTVGGRNKLKKILDKTRISILPQKPYNDIGIGQSQDDSIVGLRQTKHIPAALPVSGTLSSSNPDLLQSHHRILDFSTTPDLPDQVLRVFKADQQSRYIMISKDTTAKEVVIQAIREFAVTATPEQYSLCEVSVTPEGVIKQRRLPDQLSKLADRIQLSGRYYLKNNMETETLCSDEDAQELLRESQISLLQLSTVEVATQLSMRNFELFRNIEPTEYIDDLFKLKSKTSCANLKKFEEVINQETFWVASEILRETNQLKRMKIIKHFIKIALHCRECKNFNSMFAIISGLNLAPVARLRTTWEKLPNKYEKLFQDLQDLFDPSRNMAKYRNVLSGQNLQPPVIPLFPVIKKDLTFLHEGNDSKVDGLVNFEKLRMIAKEIRHVGRMASVNMDPALMFRTRKKKWRSLGSLSQGSANATVLDVAQTGGHKKRVRRSSFLNAKKLYEDAQMARKVKQYLSNLELEMDEESLQTLSLQCEPATSTLPKNPGDKKPVKSETSPVAPRAGPQQKVQPQQPLAQPQPPHKVSQGLQVPAVSLYPSRKKVPVKDLPPFGINSPQALKKILSLSEEGSLERHRKQAEDTISNASSQLSSPPTSPQSSPRKGYALALSGTVDNFSDSGHSEISSRSSIVSNSSFDSVPVSLHDERRQRHSVSIVESNLGVGRMERRTLMEPDQYSLGSYAPVSESRGLYAAATVISSPSTEELSHDQGDRASLDAADSGRGSWTSCSSGSHDNIQTIQHQRSWETLPFGHTHFDYSGDAASIWASGGHMDQMMFSDHSTKYNRQNQSRESLEQAQSRASWASSTGYWGEDSEGDTGTIKRRGGKDVSAEAESSSMVPVTTEEAKPVPMPAHIAVTPSTTKGLIARKEGRYREPPPTPPGYVGIPIADFPEGPCHPARKPPDYNVALQRSRMVARPTEAPAPGQTPPAAAASRPGSKPQWHKPSDADPRLAPFQPQGFAGAEEDEDEQVSAV.

Disordered regions lie at residues 40–59 (HVSSSHSGCSITSDSGSSSL) and 68–101 (SEAGDMDLSGLPETAVDSEDDDDEEDIERASDPL). Residues 83 to 94 (VDSEDDDDEEDI) show a composition bias toward acidic residues. 135 to 254 (AFANMTMSVR…VEEEGEIVMV (120 aa)) provides a ligand contact to a nucleoside 3',5'-cyclic phosphate. Residues 267–380 (KGHIVIKGTS…RLLNIACAAK (114 aa)) enclose the N-terminal Ras-GEF domain. The 86-residue stretch at 385 to 470 (LMTLTKPSRE…ITVKTNLFVF (86 aa)) folds into the PDZ domain. Ser-501 bears the Phosphoserine mark. Residues 606 to 692 (PDQVLRVFKA…GRYYLKNNME (87 aa)) enclose the Ras-associating domain. Thr-644 bears the Phosphothreonine; by PLK2 mark. In terms of domain architecture, Ras-GEF spans 717–944 (STVEVATQLS…SQGSANATVL (228 aa)). Phosphoserine; by PLK2 is present on Ser-806. Ser-930 carries the phosphoserine modification. A phosphoserine; by PLK2 mark is found at Ser-933 and Ser-1022. The tract at residues 1002-1051 (PATSTLPKNPGDKKPVKSETSPVAPRAGPQQKVQPQQPLAQPQPPHKVSQ) is disordered. Residues 1030–1041 (PQQKVQPQQPLA) show a composition bias toward low complexity. Phosphoserine occurs at positions 1079, 1088, 1094, 1115, 1119, and 1158. Positions 1093–1159 (GSLERHRKQA…RSSIVSNSSF (67 aa)) are disordered. Composition is skewed to low complexity over residues 1110 to 1124 (SSQLSSPPTSPQSSP) and 1140 to 1159 (SDSGHSEISSRSSIVSNSSF). Ser-1175 carries the phosphoserine; by PLK2 modification. Disordered regions lie at residues 1224 to 1256 (STEELSHDQGDRASLDAADSGRGSWTSCSSGSH), 1303 to 1369 (STKY…EEAK), and 1390 to 1496 (RKEG…VSAV). The span at 1227 to 1237 (ELSHDQGDRAS) shows a compositional bias: basic and acidic residues. Composition is skewed to polar residues over residues 1246–1256 (GSWTSCSSGSH) and 1306–1330 (YNRQNQSRESLEQAQSRASWASSTG). The span at 1440–1455 (PTEAPAPGQTPPAAAA) shows a compositional bias: low complexity. Acidic residues predominate over residues 1485 to 1496 (AEEDEDEQVSAV).

This sequence belongs to the RAPGEF2 family. In terms of assembly, found in a complex, at least composed of KIDINS220, MAGI2, NTRK1 and RAPGEF2; the complex is mainly formed at late endosomes in a neuronal growth factor (NGF)-dependent manner. Interacts (via C-terminal domain) with NEDD4 (via WW domains); this interaction leads to ubiquitination and degradation via the proteasome pathway in a cAMP-independent manner. Interacts with MAGI1 (via PDZ domain). Interacts with ADRB1 (via C-terminal PDZ motif); the interaction is direct. Interacts (via Ras-associating domain) with RAP1A (via GTP-bound active form). Interacts weakly with HRAS (via GDP- and GTP-bound forms). Interacts (via C-terminal domain) with MAGI2 (via PDZ and WW domains). Interacts with CDH1, CTNNB1 and TJP1. Post-translationally, ubiquitinated by NEDD4, leading to proteasomal degradation. Phosphorylation by PLK2 promotes its activity. As to expression, expressed in all layers of the cerebral cortex, hippocampus and cerebellum. Expressed in the cortical plate, cingulate cortex and the subventricular zone. Expressed in neurons and endocrine cells (at protein level). Expressed in melanoma cells.

It localises to the cytoplasm. It is found in the perinuclear region. Its subcellular location is the cell membrane. The protein resides in the late endosome. The protein localises to the cell junction. Functionally, functions as a guanine nucleotide exchange factor (GEF), which activates Rap and Ras family of small GTPases by exchanging bound GDP for free GTP in a cAMP-dependent manner. Serves as a link between cell surface receptors and Rap/Ras GTPases in intracellular signaling cascades. Also acts as an effector for Rap1 by direct association with Rap1-GTP thereby leading to the amplification of Rap1-mediated signaling. Shows weak activity on HRAS. It is controversial whether RAPGEF2 binds cAMP and cGMP or not. Its binding to ligand-activated beta-1 adrenergic receptor ADRB1 leads to the Ras activation through the G(s)-alpha signaling pathway. Involved in the cAMP-induced Ras and Erk1/2 signaling pathway that leads to sustained inhibition of long term melanogenesis by reducing dendrite extension and melanin synthesis. Also provides inhibitory signals for cell proliferation of melanoma cells and promotes their apoptosis in a cAMP-independent nanner. Regulates cAMP-induced neuritogenesis by mediating the Rap1/B-Raf/ERK signaling through a pathway that is independent on both PKA and RAPGEF3/RAPGEF4. Involved in neuron migration and in the formation of the major forebrain fiber connections forming the corpus callosum, the anterior commissure and the hippocampal commissure during brain development. Involved in neuronal growth factor (NGF)-induced sustained activation of Rap1 at late endosomes and in brain-derived neurotrophic factor (BDNF)-induced axon outgrowth of hippocampal neurons. Plays a role in the regulation of embryonic blood vessel formation and in the establishment of basal junction integrity and endothelial barrier function. May be involved in the regulation of the vascular endothelial growth factor receptor KDR and cadherin CDH5 expression at allantois endothelial cell-cell junctions. In Mus musculus (Mouse), this protein is Rap guanine nucleotide exchange factor 2 (Rapgef2).